Reading from the N-terminus, the 171-residue chain is Lipoprotein signal peptidase (171 aa).

The next 3 helical transmembrane spans lie at 7-27, 64-84, and 88-108; these read GLIA…WLYF, LGRW…SVWM, and GSRL…GNAI. Catalysis depends on residues D118 and D136. Residues 128 to 148 form a helical membrane-spanning segment; it reads SWYVFNVADAAIVAGVVGLIL.

This sequence belongs to the peptidase A8 family.

The protein resides in the cell inner membrane. It catalyses the reaction Release of signal peptides from bacterial membrane prolipoproteins. Hydrolyzes -Xaa-Yaa-Zaa-|-(S,diacylglyceryl)Cys-, in which Xaa is hydrophobic (preferably Leu), and Yaa (Ala or Ser) and Zaa (Gly or Ala) have small, neutral side chains.. It functions in the pathway protein modification; lipoprotein biosynthesis (signal peptide cleavage). This protein specifically catalyzes the removal of signal peptides from prolipoproteins. The chain is Lipoprotein signal peptidase from Methylorubrum extorquens (strain PA1) (Methylobacterium extorquens).